A 247-amino-acid polypeptide reads, in one-letter code: tRNA pseudouridine synthase A (247 aa).

Asp52 functions as the Nucleophile in the catalytic mechanism. Position 113 (Tyr113) interacts with substrate.

The protein belongs to the tRNA pseudouridine synthase TruA family. Homodimer.

The catalysed reaction is uridine(38/39/40) in tRNA = pseudouridine(38/39/40) in tRNA. In terms of biological role, formation of pseudouridine at positions 38, 39 and 40 in the anticodon stem and loop of transfer RNAs. The chain is tRNA pseudouridine synthase A from Sinorhizobium medicae (strain WSM419) (Ensifer medicae).